The primary structure comprises 230 residues: CRP-like protein Clp (230 aa).

18-139 contacts a nucleoside 3',5'-cyclic phosphate; sequence PSLALDAGTI…APKILYAIGV (122 aa). Residues 158 to 230 form the HTH crp-type domain; that stretch reads LDVTDRIVRT…GKTVVLYGTR (73 aa). Positions 190-209 form a DNA-binding region, H-T-H motif; the sequence is RQELARLVGCSREMAGRVLK.

As to quaternary structure, homodimer.

Its subcellular location is the cytoplasm. With respect to regulation, allosterically inhibited by cyclic di-GMP (c-di-GMP), which binds to Clp and abolishes its ability to bind its target gene promoter. Functionally, global transcriptional regulator that regulates virulence factors production by activating or repressing the expression of a large set of genes in diffusible signal factor (DSF) pathway. The protein is CRP-like protein Clp (clp) of Xanthomonas oryzae pv. oryzae (strain MAFF 311018).